Reading from the N-terminus, the 352-residue chain is Holliday junction branch migration complex subunit RuvB (352 aa).

Positions 5–191 (TDDFSEQRVI…FGIVARLEFY (187 aa)) are large ATPase domain (RuvB-L). ATP is bound by residues L30, R31, G72, K75, T76, T77, 138-140 (EDY), R181, Y191, and R228. T76 serves as a coordination point for Mg(2+). Residues 192–262 (TPLELTRIVT…MADAALVMLD (71 aa)) form a small ATPAse domain (RuvB-S) region. Positions 265–352 (PVGFDVMDRK…GPNGELWGGQ (88 aa)) are head domain (RuvB-H). Residues R301, R320, and R325 each coordinate DNA.

The protein belongs to the RuvB family. In terms of assembly, homohexamer. Forms an RuvA(8)-RuvB(12)-Holliday junction (HJ) complex. HJ DNA is sandwiched between 2 RuvA tetramers; dsDNA enters through RuvA and exits via RuvB. An RuvB hexamer assembles on each DNA strand where it exits the tetramer. Each RuvB hexamer is contacted by two RuvA subunits (via domain III) on 2 adjacent RuvB subunits; this complex drives branch migration. In the full resolvosome a probable DNA-RuvA(4)-RuvB(12)-RuvC(2) complex forms which resolves the HJ.

The protein resides in the cytoplasm. It carries out the reaction ATP + H2O = ADP + phosphate + H(+). In terms of biological role, the RuvA-RuvB-RuvC complex processes Holliday junction (HJ) DNA during genetic recombination and DNA repair, while the RuvA-RuvB complex plays an important role in the rescue of blocked DNA replication forks via replication fork reversal (RFR). RuvA specifically binds to HJ cruciform DNA, conferring on it an open structure. The RuvB hexamer acts as an ATP-dependent pump, pulling dsDNA into and through the RuvAB complex. RuvB forms 2 homohexamers on either side of HJ DNA bound by 1 or 2 RuvA tetramers; 4 subunits per hexamer contact DNA at a time. Coordinated motions by a converter formed by DNA-disengaged RuvB subunits stimulates ATP hydrolysis and nucleotide exchange. Immobilization of the converter enables RuvB to convert the ATP-contained energy into a lever motion, pulling 2 nucleotides of DNA out of the RuvA tetramer per ATP hydrolyzed, thus driving DNA branch migration. The RuvB motors rotate together with the DNA substrate, which together with the progressing nucleotide cycle form the mechanistic basis for DNA recombination by continuous HJ branch migration. Branch migration allows RuvC to scan DNA until it finds its consensus sequence, where it cleaves and resolves cruciform DNA. This Herminiimonas arsenicoxydans protein is Holliday junction branch migration complex subunit RuvB.